Consider the following 487-residue polypeptide: DNA-dependent metalloprotease SPRTN (487 aa).

Methionine 1 bears the N-acetylmethionine mark. The SprT-like domain maps to 45-212 (LQGLFVLFND…KTCGGTYIKI (168 aa)). Position 111 (histidine 111) interacts with Zn(2+). Glutamate 112 is an active-site residue. Zn(2+) contacts are provided by histidine 115 and histidine 130. The tract at residues 219 to 248 (SKKGKGKTKLRKQPVSEAENKDKPNRGEKQ) is disordered. The span at 220-230 (KKGKGKTKLRK) shows a compositional bias: basic residues. Lysine 230 carries the N6-acetyllysine modification. The segment covering 236–247 (AENKDKPNRGEK) has biased composition (basic and acidic residues). An SHP-box motif is present at residues 253 to 261 (FTGKGYVLG). Serine 267 carries the phosphoserine modification. A compositionally biased stretch (polar residues) spans 280-289 (SQEPLSQDHS). The tract at residues 280–317 (SQEPLSQDHSANALRPHSKTEVKFEQNGPSKKTSVASP) is disordered. Lysine 302 participates in a covalent cross-link: Glycyl lysine isopeptide (Lys-Gly) (interchain with G-Cter in SUMO2). The segment covering 306–317 (NGPSKKTSVASP) has biased composition (polar residues). Positions 324–331 (QNVLSNYF) match the PIP-box motif. A Glycyl lysine isopeptide (Lys-Gly) (interchain with G-Cter in SUMO2); alternate cross-link involves residue lysine 340. Lysine 340 is covalently cross-linked (Glycyl lysine isopeptide (Lys-Gly) (interchain with G-Cter in ubiquitin); alternate). Positions 347–379 (GSPVKSLTVGDSTTKSVSAGSQRRVTSSRTSLR) are disordered. Serine 373 is modified (phosphoserine). A Nuclear localization signal motif is present at residues 401–412 (GKLPSKRPRIED). Residue lysine 413 forms a Glycyl lysine isopeptide (Lys-Gly) (interchain with G-Cter in ubiquitin) linkage. Glycyl lysine isopeptide (Lys-Gly) (interchain with G-Cter in SUMO2) cross-links involve residues lysine 422 and lysine 423. Residues 427-455 (QSGGGDVTSSSHPPAAAQSPSGASGQSRV) are disordered. Low complexity predominate over residues 435–453 (SSSHPPAAAQSPSGASGQS). The segment at 455–482 (VVHCPVCQDEVSETQINEHLDWCLERDS) adopts a UBZ4-type zinc-finger fold. Cysteine 458, cysteine 461, histidine 473, and cysteine 477 together coordinate Zn(2+). Lysine 486 is covalently cross-linked (Glycyl lysine isopeptide (Lys-Gly) (interchain with G-Cter in SUMO2)).

This sequence belongs to the Spartan family. As to quaternary structure, homodimer. Interacts (VIA PIP-box) with PCNA (when ubiquitinated). Interacts (via its SHP-box) with VCP/p97. Interacts with RAD18. Interacts with KCTD13 and POLD3. It depends on Zn(2+) as a cofactor. Post-translationally, autocatalytically cleaved in response to double-stranded DNA-binding: autocatalytic cleavage takes place in trans and leads to inactivation. Monoubiquitinated; monoubiquitination promotes exclusion from chromatin. Deubiquitinated by VCPIP1: deubiquitination is required for subsequent acetylation and recruitment to chromatin and DNA damage sites. In terms of processing, acetylated following deubiquitination by VCPIP1, leading to recruitment to chromatin and DNA damage sites. Post-translationally, phosphorylation by CHEK1 promotes recruitment to chromatin.

The protein localises to the nucleus. Its subcellular location is the chromosome. Its activity is regulated as follows. DNA-binding activates the protease activity: single-stranded DNA-binding specifically activates ability to cleave covalent DNA-protein cross-links (DPCs). In contrast, double-stranded DNA-binding specifically activates autocatalytic cleavage, and subsequent inactivation. Functionally, DNA-dependent metalloendopeptidase that mediates the proteolytic cleavage of covalent DNA-protein cross-links (DPCs) during DNA synthesis, thereby playing a key role in maintaining genomic integrity. DPCs are highly toxic DNA lesions that interfere with essential chromatin transactions, such as replication and transcription, and which are induced by reactive agents, such as UV light or formaldehyde. Associates with the DNA replication machinery and specifically removes DPCs during DNA synthesis. Catalyzes proteolytic cleavage of the HMCES DNA-protein cross-link following unfolding by the BRIP1/FANCJ helicase. Acts as a pleiotropic protease for DNA-binding proteins cross-linked with DNA, such as TOP1, TOP2A, histones H3 and H4. Mediates degradation of DPCs that are not ubiquitinated, while it is not able to degrade ubiquitinated DPCs. SPRTN activation requires polymerase collision with DPCs followed by helicase bypass of DPCs. Involved in recruitment of VCP/p97 to sites of DNA damage. Also acts as an activator of CHEK1 during normal DNA replication by mediating proteolytic cleavage of CHEK1, thereby promoting CHEK1 removal from chromatin and subsequent activation. Does not activate CHEK1 in response to DNA damage. May also act as a 'reader' of ubiquitinated PCNA: recruited to sites of UV damage and interacts with ubiquitinated PCNA and RAD18, the E3 ubiquitin ligase that monoubiquitinates PCNA. Facilitates chromatin association of RAD18 and is required for efficient PCNA monoubiquitination, promoting a feed-forward loop to enhance PCNA ubiquitination and translesion DNA synthesis. This chain is DNA-dependent metalloprotease SPRTN, found in Bos taurus (Bovine).